We begin with the raw amino-acid sequence, 299 residues long: ATP phosphoribosyltransferase (299 aa).

The protein belongs to the ATP phosphoribosyltransferase family. Long subfamily. As to quaternary structure, equilibrium between an active dimeric form, an inactive hexameric form and higher aggregates. Interconversion between the various forms is largely reversible and is influenced by the natural substrates and inhibitors of the enzyme. It depends on Mg(2+) as a cofactor.

It is found in the cytoplasm. It catalyses the reaction 1-(5-phospho-beta-D-ribosyl)-ATP + diphosphate = 5-phospho-alpha-D-ribose 1-diphosphate + ATP. Its pathway is amino-acid biosynthesis; L-histidine biosynthesis; L-histidine from 5-phospho-alpha-D-ribose 1-diphosphate: step 1/9. With respect to regulation, feedback inhibited by histidine. Functionally, catalyzes the condensation of ATP and 5-phosphoribose 1-diphosphate to form N'-(5'-phosphoribosyl)-ATP (PR-ATP). Has a crucial role in the pathway because the rate of histidine biosynthesis seems to be controlled primarily by regulation of HisG enzymatic activity. The protein is ATP phosphoribosyltransferase of Salmonella enteritidis PT4 (strain P125109).